We begin with the raw amino-acid sequence, 515 residues long: MSDAFSTPADHALSHPELEAILENAQAGPSSIGDGAEGMSIEEAFEVDETVRRVLEGDYKTIGLQFPDELLPSSVSVYRAIQTRIAHTGAQAYVLADSTYGNCCPDVLSCLHLPADFLVHYGHACLTPTDALPVHYVFPRQKLDVKQAVESLLAASKNELDGDGRKGIVVVWDVSYDWLANDIRDTFSQDSTIQISFASIQKPTLASQKGLKDVKGKTPALRSVEPPQGLEMNDCVLWYIGEEGRSCMNLQMTHANNPLFIYSPSSQSVSPLHRTTSRLLSRRLFALHQALSADVFGLIVSNIGLASSKPLLAQLREDLKRAKKKSYTLSVGRLNPAKLANFAEIECFVLVGCAEGGVVDSKDFLRPIITPWELELALQGPDHVWAPENWTLDLGTVLKDAQEREIKIKQDSSTADSDDDSLEFSLITGTMRTKKRFAFGNGTHTLENNKLLGDGGVQDLTLRNQNFSLSKLESAGSTFLASREFQGLEPRYGMDEPSVLEQGRSGVARGYTEEK.

The [4Fe-4S] cluster site is built by Cys-104, Cys-125, and Cys-353. Residues 493–515 are disordered; it reads GMDEPSVLEQGRSGVARGYTEEK.

The protein belongs to the DPH1/DPH2 family. DPH2 subfamily. As to quaternary structure, component of the 2-(3-amino-3-carboxypropyl)histidine synthase complex composed of DPH1, DPH2, DPH3 and a NADH-dependent reductase, predominantly CBR1. [4Fe-4S] cluster is required as a cofactor.

The protein resides in the cytoplasm. It participates in protein modification; peptidyl-diphthamide biosynthesis. Required for the first step of diphthamide biosynthesis, a post-translational modification of histidine which occurs in elongation factor 2. DPH1 and DPH2 transfer a 3-amino-3-carboxypropyl (ACP) group from S-adenosyl-L-methionine (SAM) to a histidine residue, the reaction is assisted by a reduction system comprising DPH3 and a NADH-dependent reductase, predominantly CBR1. Facilitates the reduction of the catalytic iron-sulfur cluster found in the DPH1 subunit. The protein is 2-(3-amino-3-carboxypropyl)histidine synthase subunit 2 (DPH2) of Cryptococcus neoformans var. neoformans serotype D (strain B-3501A) (Filobasidiella neoformans).